A 436-amino-acid polypeptide reads, in one-letter code: Cyclic GMP-AMP synthase (436 aa).

112–117 is a binding site for GTP; sequence QGSFQY. Residues D131 and D133 each contribute to the Mg(2+) site. Position 182 (R182) interacts with ATP. D193 contacts Mg(2+). S259 is a binding site for ATP. GTP-binding residues include K287, S301, and D348. Disordered regions lie at residues 339 to 358 and 417 to 436; these read RGVESPDSTDEKPLFPPSYK and AQEPSSASKPEKISSTMVSG. Residues 419-436 are compositionally biased toward polar residues; it reads EPSSASKPEKISSTMVSG. Residue G436 forms a Glycyl lysine isopeptide (Gly-Lys) (interchain with K-? in acceptor proteins) linkage.

It belongs to the CD-NTase family. A01 subfamily. In terms of assembly, monomer. Interacts with Cap2 in the presence and absence of phage T2. A Cap2 dimer is bound on either side by a DncV monomer. Mg(2+) serves as cofactor. Post-translationally, in bacteria expressing capV-cdnD-cap2, this protein is conjugated to a number of other proteins (by Cap2 via this protein's C-terminal Gly residue), many of which are involved in metabolism. More conjugated protein is found in the absence of Cap3.

The enzyme catalyses GTP + ATP = 3',3'-cGAMP + 2 diphosphate. Primed for activation by Cap2 which conjugates it to cellular proteins; priming is target protein-specific (green fluorescent protein does not activate the enzyme), but which protein(s) activate is unclear. Enzymatic activity of DncV is inhibited by folate-like molecules, such as 5-methyltetrahydrofolate di-glutamate and 5-methyltetrahydrofolate, suggesting the existence of a signaling pathway that links folate-like metabolism cofactors to the regulation of cyclic dinucleotide second messenger synthesis. Lacks a regulatory loop and is constitutively activated. Functionally, cyclic nucleotide synthase (second messenger synthase) of a CBASS antivirus system. CBASS (cyclic oligonucleotide-based antiphage signaling system) provides immunity against bacteriophages. The CD-NTase protein (DncV, this protein) synthesizes cyclic nucleotides in response to infection; these serve as specific second messenger signals. The signals activate a diverse range of effectors, leading to bacterial cell death and thus abortive phage infection. A type II-A(GA) CBASS system. In terms of biological role, catalyzes the synthesis of 3',3'-cyclic GMP-AMP (cGAMP), a second messenger in cell signal transduction, from GTP and ATP in response to phage infection. Also able to produce c-di-AMP and c-di-GMP from ATP and GTP, respectively; however, cGAMP is the dominant molecule produced by DncV in vivo, contrary to the 2'3'-cGAMP produced by eukaryotes. Is required for efficient V.cholerae intestinal colonization, and down-regulates the colonization-influencing process of chemotaxis. Is not active with dATP, TTP, UTP or CTP. Its product controls the activity of cGAMP-activated phospholipase CapV, a patatin-like lipase that is a direct cGAMP receptor encoded in the dncV operon. Protects E.coli against phage infection. When the CBASS operon (capV-dncV-cap2-cap3) is introduced in E.coli MG1655 there is about 100-fold protection against phages P1 and T2. When the operon is introduced in E.coli MG1655 there is a more than 10(3) decrease in the efficiency of T2 plaque formation. Protects 100-fold against phage T5, offers no protection against T7. When the operon is introduced in E.coli MG1655 it protects against phages T2, T4, T5 and T6. Another paper shows the operon confers protection against phages P1, T2, T5 and T6 but not T4 or lambda. The sequence is that of Cyclic GMP-AMP synthase from Vibrio cholerae serotype O1 (strain ATCC 39315 / El Tor Inaba N16961).